The sequence spans 255 residues: Acetyl-coenzyme A carboxylase carboxyl transferase subunit alpha (255 aa).

The region spanning 1-235 (MNIAKIVREA…KKELQTELAR (235 aa)) is the CoA carboxyltransferase C-terminal domain.

This sequence belongs to the AccA family. In terms of assembly, acetyl-CoA carboxylase is a heterohexamer composed of biotin carboxyl carrier protein (AccB), biotin carboxylase (AccC) and two subunits each of ACCase subunit alpha (AccA) and ACCase subunit beta (AccD).

It is found in the cytoplasm. The enzyme catalyses N(6)-carboxybiotinyl-L-lysyl-[protein] + acetyl-CoA = N(6)-biotinyl-L-lysyl-[protein] + malonyl-CoA. Its pathway is lipid metabolism; malonyl-CoA biosynthesis; malonyl-CoA from acetyl-CoA: step 1/1. In terms of biological role, component of the acetyl coenzyme A carboxylase (ACC) complex. First, biotin carboxylase catalyzes the carboxylation of biotin on its carrier protein (BCCP) and then the CO(2) group is transferred by the carboxyltransferase to acetyl-CoA to form malonyl-CoA. This Streptococcus pneumoniae (strain CGSP14) protein is Acetyl-coenzyme A carboxylase carboxyl transferase subunit alpha.